Reading from the N-terminus, the 427-residue chain is MLDIKWIRENPEALDAALAKRGAEPLAQTLVALDEKRRSAVQKTQDLLSRRNAASKEIGAAMAQKNAELAEKLKAEVAEIKETLPAAEEEERTLSAELIDALSRIPNVPFDDVPVGKDEHDNAVARIVGEKPRWNHTPREHFEIGEALGYMDFERAAKLSGSRFTVLTGPLARLERALGQFMIDLHTREHGYTEVSSPLMVRAEAVFGTGSLPKFEEDLFKTTDGRYLIPTAEVTLTNLVREEILDQEKLPLRFTALTPSFRSEAGSAGRDTRGMLRQHQFWKCELVSITDAESSIAEHERMTACAEEVLKRLGLHFRTMTLCTGDMGFGSRKTYDLEVWLPGQNAFREISSCSVCGDFQARRMNARYRGKDDKNNKFVHTLNGSGTAVGRCLIAVLENYLNEDGSVTIPDVLLPYMGGLTKIERAA.

231-233 (TAE) lines the L-serine pocket. 262–264 (RSE) contributes to the ATP binding site. Glutamate 285 is a binding site for L-serine. 349–352 (EISS) lines the ATP pocket. An L-serine-binding site is contributed by serine 385.

This sequence belongs to the class-II aminoacyl-tRNA synthetase family. Type-1 seryl-tRNA synthetase subfamily. In terms of assembly, homodimer. The tRNA molecule binds across the dimer.

The protein resides in the cytoplasm. The catalysed reaction is tRNA(Ser) + L-serine + ATP = L-seryl-tRNA(Ser) + AMP + diphosphate + H(+). The enzyme catalyses tRNA(Sec) + L-serine + ATP = L-seryl-tRNA(Sec) + AMP + diphosphate + H(+). Its pathway is aminoacyl-tRNA biosynthesis; selenocysteinyl-tRNA(Sec) biosynthesis; L-seryl-tRNA(Sec) from L-serine and tRNA(Sec): step 1/1. In terms of biological role, catalyzes the attachment of serine to tRNA(Ser). Is also able to aminoacylate tRNA(Sec) with serine, to form the misacylated tRNA L-seryl-tRNA(Sec), which will be further converted into selenocysteinyl-tRNA(Sec). In Rhizobium etli (strain ATCC 51251 / DSM 11541 / JCM 21823 / NBRC 15573 / CFN 42), this protein is Serine--tRNA ligase.